The sequence spans 252 residues: MERVLIVNADDFGLSKGQNYGIVEAYRNGVVTSTTALVNGEAIDHAAQLSRELPALGVGMHFVLTLGKPVSEMPGLTRDGLLGKWIWQMAEEDTLPLDEIAHELACQYQRFIDVFGSEPTHLDSHHHVHMFPQIFPIVARFAAQRGIALRIDRQTVLNADDLPSDLRSTQGFSSEFYGEEITEACFLRILDASAHRGEASLEVMCHPAFVDNIIRQSAYCYPRLTELEVLTSASLKAAIAERGYRPGSFLDI.

Mg(2+) is bound by residues His61 and His125.

It belongs to the YdjC deacetylase family. ChbG subfamily. Homodimer. Mg(2+) serves as cofactor.

It localises to the cytoplasm. It carries out the reaction N,N'-diacetylchitobiose + H2O = N-acetyl-beta-D-glucosaminyl-(1-&gt;4)-D-glucosamine + acetate. The catalysed reaction is diacetylchitobiose-6'-phosphate + H2O = N'-monoacetylchitobiose-6'-phosphate + acetate. The protein operates within glycan degradation; chitin degradation. Functionally, involved in the degradation of chitin. ChbG is essential for growth on the acetylated chitooligosaccharides chitobiose and chitotriose but is dispensable for growth on cellobiose and chitosan dimer, the deacetylated form of chitobiose. Deacetylation of chitobiose-6-P and chitotriose-6-P is necessary for both the activation of the chb promoter by the regulatory protein ChbR and the hydrolysis of phosphorylated beta-glucosides by the phospho-beta-glucosidase ChbF. Catalyzes the removal of only one acetyl group from chitobiose-6-P to yield monoacetylchitobiose-6-P, the inducer of ChbR and the substrate of ChbF. The protein is Chitooligosaccharide deacetylase of Salmonella typhimurium (strain LT2 / SGSC1412 / ATCC 700720).